The sequence spans 483 residues: GTPase Der (483 aa).

2 EngA-type G domains span residues 3 to 167 (FTLA…GEER) and 212 to 387 (LRIA…EIWN). GTP-binding positions include 9–16 (GRPNVGKS), 56–60 (DTAGL), 119–122 (NKAE), 218–225 (GRPNAGKS), 265–269 (DTAGM), and 330–333 (NKWD). In terms of domain architecture, KH-like spans 388-472 (RRISTGRLNR…PIRLSLRTSD (85 aa)).

Belongs to the TRAFAC class TrmE-Era-EngA-EngB-Septin-like GTPase superfamily. EngA (Der) GTPase family. Associates with the 50S ribosomal subunit.

Its function is as follows. GTPase that plays an essential role in the late steps of ribosome biogenesis. The polypeptide is GTPase Der (Brucella suis biovar 1 (strain 1330)).